Here is a 134-residue protein sequence, read N- to C-terminus: Small ribosomal subunit protein uS11 (134 aa).

The protein belongs to the universal ribosomal protein uS11 family. As to quaternary structure, part of the 30S ribosomal subunit. Interacts with proteins S7 and S18. Binds to IF-3.

In terms of biological role, located on the platform of the 30S subunit, it bridges several disparate RNA helices of the 16S rRNA. Forms part of the Shine-Dalgarno cleft in the 70S ribosome. This chain is Small ribosomal subunit protein uS11, found in Delftia acidovorans (strain DSM 14801 / SPH-1).